A 421-amino-acid chain; its full sequence is WD repeat and SOCS box-containing protein 1 (421 aa).

6 WD repeats span residues 32–71 (KCGR…QNFL), 124–165 (SRCV…LLLN), 168–208 (DHTE…NMMK), 212–251 (GHQN…MIRK), 254–293 (GHHH…ILME), and 309–346 (ANDR…DYPV). Residues 372–421 (DGSVYFWATPRQVPSLQHLCRMSIRRVMPTQEVQELPIPSKLLEFLSYRI) enclose the SOCS box domain.

Interacts with DIO2. Component of the probable ECS(WSB1) E3 ubiquitin ligase complex which contains CUL5, RNF7/RBX2, Elongin BC complex and WSB1. Component of a probable ECS-like E3 ubiquitin-protein ligase complex which contains CUL5, RBX1, Elongin BC complex and WSB1. Interacts with CUL5, RNF7, ELOB and ELOC. Binds to HIPK2 through WD40 repeats.

The protein operates within protein modification; protein ubiquitination. Probable substrate-recognition component of a SCF-like ECS (Elongin-Cullin-SOCS-box protein) E3 ubiquitin ligase complex which mediates the ubiquitination and subsequent proteasomal degradation of target proteins. Recognizes type II iodothyronine deiodinase/DIO2. Confers constitutive instability to HIPK2 through proteasomal degradation. This is WD repeat and SOCS box-containing protein 1 (WSB1) from Homo sapiens (Human).